Consider the following 949-residue polypeptide: Piwi-like protein 2 (949 aa).

The disordered stretch occupies residues 1 to 125 (MDPTRPPFRG…SLSTRVQQAS (125 aa)). A compositionally biased stretch (polar residues) spans 115 to 125 (PSLSTRVQQAS). In terms of domain architecture, PAZ spans 366 to 478 (SVLDIMNILY…LLPELAFMTG (113 aa)). The 292-residue stretch at 644-935 (LLVCLISGTR…LAFLSGQFLH (292 aa)) folds into the Piwi domain. Residues aspartate 721, glutamate 759, aspartate 791, and histidine 924 contribute to the active site.

The protein belongs to the argonaute family. Piwi subfamily. Component of the PET complex. It depends on Mg(2+) as a cofactor. Post-translationally, methylated on arginine residues; required for the interaction with Tudor domain-containing protein and subsequent localization to the meiotic nuage, also named P granule. Expressed in oocytes, testis and liver (at protein level).

Its subcellular location is the cytoplasm. It is found in the nucleus. Endoribonuclease that plays a central role during spermatogenesis by repressing transposable elements and preventing their mobilization, which is essential for the germline integrity. Plays an essential role in meiotic differentiation of spermatocytes, germ cell differentiation and in self-renewal of spermatogonial stem cells. Acts via the piRNA metabolic process, which mediates the repression of transposable elements during meiosis by forming complexes composed of piRNAs and Piwi proteins and govern the methylation and subsequent repression of transposons. During piRNA biosynthesis, plays a key role in the piRNA amplification loop, also named ping-pong amplification cycle, by acting as a 'slicer-competent' piRNA endoribonuclease that cleaves primary piRNAs, which are then loaded onto 'slicer-incompetent' piwil4. Piwil2 slicing produces a pre-miRNA intermediate, which is then processed in mature piRNAs, and as well as a 16 nucleotide by-product that is degraded. Required for piwil4/miwi2 nuclear localization and association with secondary piRNAs antisense. Represses circadian rhythms by promoting the stability and activity of core clock components BMAL1 and CLOCK. In Xenopus tropicalis (Western clawed frog), this protein is Piwi-like protein 2 (piwil2).